A 1552-amino-acid chain; its full sequence is Nonribosomal peptide synthetase acrB (1552 aa).

Residues 129–564 are condensation; that stretch reads ASFAQERIWF…PVANLAIFDE (436 aa). Residues 594 to 999 form an adenylation region; sequence RHCKAHPRDV…RMEGSAQVKI (406 aa). Residues 1110–1186 enclose the Carrier domain; that stretch reads APLGVEEEVM…AMARLLQPQE (77 aa). Ser-1146 bears the O-(pantetheine 4'-phosphoryl)serine mark. Residues 1226-1464 are thiolester reductase (R) domain; sequence LTGATGFLGR…DFVGVDAVAS (239 aa).

This sequence belongs to the NRP synthetase family.

It functions in the pathway secondary metabolite biosynthesis. Its function is as follows. Nonribosomal peptide synthetase; part of the cluster that mediates the biosynthesis of acurin A, a highly reduced polyketide coupled to a serine via a peptide bond. The activities of the highly reducing polyketide synthase acrA and the nonribosomal peptide synthetase acrB are collectively responsible for the synthesis of the acurin A core structure with a heptaketide backbone produced by acrA covalently fused to a L-serine by acrB. After the formation of the PK-NRP hybrid product, it is detached from acrB by reductive release to set up the formation of the lactam ring by aldol condensation. The hydrolyase acrC then catalyzes water loss to generate a double bond in the ring. This double bond is probably reduced, which is followed by three oxidations at C-22 to generate the carboxylic acid moiety, involving probably the FAD-binding monooxygenase acrE and the cytochrome P450 monooxygenases acrD and acrF. Finally, a last methylation step performed by the O-methyltransferase acrG leads to the production of acurin A. This is Nonribosomal peptide synthetase acrB from Aspergillus aculeatus (strain ATCC 16872 / CBS 172.66 / WB 5094).